The primary structure comprises 448 residues: Death-associated protein kinase 3 (448 aa).

The Protein kinase domain maps to Tyr13–Ile275. ATP-binding positions include Leu19–Val27 and Lys42. Asp139 functions as the Proton acceptor in the catalytic mechanism. Positions Asp161–Gly204 are activation segment. Residues Thr180 and Thr225 each carry the phosphothreonine modification. Thr265 carries the post-translational modification Phosphothreonine; by autocatalysis. Phosphothreonine; by ROCK1 is present on Thr265. Ser304 carries the post-translational modification Phosphoserine; by DAPK1. Ser306 is modified (phosphoserine; by autocatalysis and DAPK1). Residues Ser307, Ser313, and Ser321 each carry the phosphoserine; by DAPK1 modification. Residues Ala390–Arg448 form an interaction with CDC5L region. The required for interaction with ATF4 but not with PAWR stretch occupies residues Leu418–Arg448. Positions Val422–Leu436 are leucine-zipper.

Belongs to the protein kinase superfamily. CAMK Ser/Thr protein kinase family. DAP kinase subfamily. In terms of assembly, homooligomer in its kinase-active form (homotrimers and homodimers are reported); monomeric in its kinase-inactive form. Homodimerization is required for activation segment autophosphorylation. Interacts with DAXX, ATF4, NLK, TCF7L2, UBE2D1, UBE2D2, UBE2D3 and CDC5L. Interacts with PAWR; also demonstrated in aorta smooth muscle cells indicative for the cytoskeletal targeting function of PAWR. Interacts with AR; enhanced by AATF. Interacts with LUZP1; the interaction is likely to occur throughout the cell cycle and reduces the LUZP1-mediated suppression of MYL9 phosphorylation. Mg(2+) is required as a cofactor. Ubiquitinated. Ubiquitination mediated by the UBE2D3 E3 ligase does not lead to proteasomal degradation, but influences promyelocytic leukemia protein nuclear bodies (PML-NBs) formation in the nucleus. Post-translationally, the phosphorylation status is critical for kinase activity, oligomerization and intracellular localization. Phosphorylation at Thr-180, Thr-225 and Thr-265 is essential for activity. The phosphorylated form is localized in the cytoplasm and nuclear translocation or retention is maximal when it is not phosphorylated. Phosphorylation increases the trimeric form, and its dephosphorylation favors a kinase-inactive monomeric form. In terms of tissue distribution, ubiquitously expressed in all tissue types examined. High levels in brain, heart, lung and spleen, lower expression in kidney, liver, skeletal muscle and testis. Isoform 2 is expressed in the smooth muscle.

It localises to the nucleus. The protein localises to the PML body. Its subcellular location is the cytoplasm. The protein resides in the cytoskeleton. It is found in the microtubule organizing center. It localises to the chromosome. The protein localises to the centromere. Its subcellular location is the spindle. The protein resides in the midbody. The enzyme catalyses L-seryl-[protein] + ATP = O-phospho-L-seryl-[protein] + ADP + H(+). The catalysed reaction is L-threonyl-[protein] + ATP = O-phospho-L-threonyl-[protein] + ADP + H(+). With respect to regulation, a sequential activation is proposed: autophosphorylation at consensus sites is leading to dimerization of the catalytic domain and activation segment exchange (producing an active confirmation of both kinase modules in trans) followed by phosphorylation at Thr-180 in the activation segment and at other regulatory sites. Phosphorylation at Thr-180, Thr-225 and Thr-265 is essential for activity. Inhibited by pyridone 6 (K00225), a potent, ATP-competitive inhibitor. Phosphorylation at Thr-180, Thr-225 and Thr-265 is essential for activity. Serine/threonine kinase which is involved in the regulation of apoptosis, autophagy, transcription, translation and actin cytoskeleton reorganization. Regulates both type I (caspase-dependent) apoptotic and type II (caspase-independent) autophagic cell deaths signal, depending on the cellular setting. Involved in formation of promyelocytic leukemia protein nuclear body (PML-NB). Involved in apoptosis involving PAWR which mediates cytoplasmic relocation; in vitro phosphorylates PAWR. Regulates myosin phosphorylation in both smooth muscle and non-muscle cells. In smooth muscle, regulates myosin either directly by phosphorylating MYL12B and MYL9 or through inhibition of smooth muscle myosin phosphatase (SMPP1M) via phosphorylation of PPP1R12A; the inhibition of SMPP1M functions to enhance muscle responsiveness to Ca(2+) and promote a contractile state. Phosphorylates MYL12B in non-muscle cells leading to reorganization of actin cytoskeleton such as in regulation of cell polarity and cell migration. Positively regulates canonical Wnt/beta-catenin signaling through interaction with NLK and TCF7L2; disrupts the NLK-TCF7L2 complex thereby influencing the phosphorylation of TCF7L2 by NLK. Phosphorylates RPL13A on 'Ser-77' upon interferon-gamma activation which is causing RPL13A release from the ribosome, RPL13A association with the GAIT complex and its subsequent involvement in transcript-selective translation inhibition. Phosphorylates STAT3 and enhances its transcriptional activity. Enhances transcription from AR-responsive promoters in a hormone- and kinase-dependent manner. Phosphorylates histone H3 on 'Thr-11' at centromeres during mitosis. The polypeptide is Death-associated protein kinase 3 (Dapk3) (Rattus norvegicus (Rat)).